Reading from the N-terminus, the 132-residue chain is Phosphoribosyl-AMP cyclohydrolase (132 aa).

Residue Asp82 coordinates Mg(2+). Cys83 is a Zn(2+) binding site. Mg(2+) is bound by residues Asp84 and Asp86. Residues Cys99 and Cys106 each contribute to the Zn(2+) site.

Belongs to the PRA-CH family. As to quaternary structure, homodimer. Requires Mg(2+) as cofactor. It depends on Zn(2+) as a cofactor.

It is found in the cytoplasm. The enzyme catalyses 1-(5-phospho-beta-D-ribosyl)-5'-AMP + H2O = 1-(5-phospho-beta-D-ribosyl)-5-[(5-phospho-beta-D-ribosylamino)methylideneamino]imidazole-4-carboxamide. It participates in amino-acid biosynthesis; L-histidine biosynthesis; L-histidine from 5-phospho-alpha-D-ribose 1-diphosphate: step 3/9. Catalyzes the hydrolysis of the adenine ring of phosphoribosyl-AMP. This chain is Phosphoribosyl-AMP cyclohydrolase, found in Paramagnetospirillum magneticum (strain ATCC 700264 / AMB-1) (Magnetospirillum magneticum).